A 447-amino-acid polypeptide reads, in one-letter code: Cysteine--tRNA ligase (447 aa).

Cys28 serves as a coordination point for Zn(2+). A 'HIGH' region motif is present at residues 30–40; the sequence is PTVYNYIHVGN. Zn(2+) contacts are provided by Cys211, His236, and Glu240. Residues 268–272 carry the 'KMSKS' region motif; sequence KMSKS. ATP is bound at residue Lys271.

Belongs to the class-I aminoacyl-tRNA synthetase family. As to quaternary structure, monomer. Zn(2+) is required as a cofactor.

The protein localises to the cytoplasm. The catalysed reaction is tRNA(Cys) + L-cysteine + ATP = L-cysteinyl-tRNA(Cys) + AMP + diphosphate. This Streptococcus pneumoniae (strain ATCC BAA-255 / R6) protein is Cysteine--tRNA ligase.